Reading from the N-terminus, the 377-residue chain is Spermidine/putrescine import ATP-binding protein PotA (377 aa).

Residues 22-252 (VRLQNVTKRF…PANRFVADFI (231 aa)) enclose the ABC transporter domain. Residue 54 to 61 (GPSGCGKT) coordinates ATP.

Belongs to the ABC transporter superfamily. Spermidine/putrescine importer (TC 3.A.1.11.1) family. The complex is composed of two ATP-binding proteins (PotA), two transmembrane proteins (PotB and PotC) and a solute-binding protein (PotD).

Its subcellular location is the cell membrane. The catalysed reaction is ATP + H2O + polyamine-[polyamine-binding protein]Side 1 = ADP + phosphate + polyamineSide 2 + [polyamine-binding protein]Side 1.. Its function is as follows. Part of the ABC transporter complex PotABCD involved in spermidine/putrescine import. Responsible for energy coupling to the transport system. This chain is Spermidine/putrescine import ATP-binding protein PotA, found in Rubrobacter xylanophilus (strain DSM 9941 / JCM 11954 / NBRC 16129 / PRD-1).